We begin with the raw amino-acid sequence, 828 residues long: Leucine--tRNA ligase (828 aa).

The short motif at 36-46 is the 'HIGH' region element; it reads PYPSGKIHIGH. The 'KMSKS' region signature appears at 595 to 599; that stretch reads KMSKS. An ATP-binding site is contributed by K598.

It belongs to the class-I aminoacyl-tRNA synthetase family.

The protein localises to the cytoplasm. The catalysed reaction is tRNA(Leu) + L-leucine + ATP = L-leucyl-tRNA(Leu) + AMP + diphosphate. The chain is Leucine--tRNA ligase from Rickettsia prowazekii (strain Madrid E).